The primary structure comprises 2472 residues: Telomere-associated protein RIF1 (2472 aa).

Residues 1–25 (MTARGQSPLAPLLETLEDPSASHGG) are disordered. A Phosphoserine modification is found at Ser402. Thr409 is subject to Phosphothreonine. 3 positions are modified to phosphoserine: Ser782, Ser979, and Ser1008. The residue at position 1047 (Thr1047) is a Phosphothreonine. Residues 1145 to 1192 (LEKSSLSNNECGSLDKTSPEMSNSNNDERKKALISSRKTSTECASSTE) form a disordered region. The segment covering 1148–1169 (SSLSNNECGSLDKTSPEMSNSN) has biased composition (polar residues). Residue Ser1162 is modified to Phosphoserine. Phosphothreonine is present on Thr1220. A phosphoserine mark is found at Ser1236 and Ser1238. Basic and acidic residues-rich tracts occupy residues 1265–1279 (AKQR…DSEK) and 1306–1315 (MRSEPEKNTE). Disordered regions lie at residues 1265 to 1318 (AKQR…EESV), 1398 to 1464 (MVNE…DVLP), and 1479 to 1587 (IEKG…DQEE). Over residues 1400-1412 (NEDSQVQITPNQK) the composition is skewed to polar residues. A phosphoserine mark is found at Ser1422, Ser1454, and Ser1513. Composition is skewed to basic and acidic residues over residues 1431 to 1464 (SQDK…DVLP) and 1500 to 1530 (EQNK…EKLV). Thr1518 bears the Phosphothreonine mark. Ser1542, Ser1552, Ser1554, Ser1556, and Ser1564 each carry phosphoserine. Basic residues predominate over residues 1565–1574 (RKKRSGKWKN). Ser1576, Ser1579, Ser1613, Ser1616, Ser1688, Ser1693, Ser1706, and Ser1709 each carry phosphoserine. Residues 1762 to 1782 (TKKADVQAPVSPSETSQANPY) form a disordered region. Positions 1771–1782 (VSPSETSQANPY) are enriched in polar residues. Position 1806 is a phosphothreonine (Thr1806). A Phosphoserine modification is found at Ser1810. Over residues 1846-1859 (AMSLESQESPNENF) the composition is skewed to polar residues. A disordered region spans residues 1846–1889 (AMSLESQESPNENFKTVGPCLGDSKNVSQESLETKEEKPEETPK). 2 positions are modified to phosphoserine: Ser1873 and Ser1876. Positions 1877 to 1889 (LETKEEKPEETPK) are enriched in basic and acidic residues. Residues 1924–2472 (EASFHGQERT…WRSPSHENSI (549 aa)) are interaction with condensed chromosomes in telophase. Ser1926 and Ser1971 each carry phosphoserine. The segment at 1992–2021 (EQTAAGELDGGNDVSDLHSSEETNTKMKNN) is disordered. A compositionally biased stretch (basic and acidic residues) spans 2006–2021 (SDLHSSEETNTKMKNN). Ser2144 and Ser2161 each carry phosphoserine. At Thr2167 the chain carries Phosphothreonine. The interval 2170 to 2446 (VWSPLASPST…SGSQLFEMHE (277 aa)) is interaction with ERCC6. Phosphoserine is present on residues Ser2172, Ser2176, Ser2195, Ser2196, and Ser2205. Over residues 2227 to 2255 (RSHSSNSSPIGKSVKTSPTTQSKHNTTSA) the composition is skewed to polar residues. The interval 2227-2269 (RSHSSNSSPIGKSVKTSPTTQSKHNTTSAKGFLSPGSRSPKFK) is disordered. Phosphoserine is present on residues Ser2260, Ser2339, Ser2391, Ser2393, Ser2465, and Ser2471.

Belongs to the RIF1 family. In terms of assembly, interacts with TP53BP1 (when phosphorylated by ATM). May interact with TRF2. Interacts with SHLD2. Interacts with ERCC6 (via WHD region). Interacts with ASTE1. Highly expressed in testis.

It is found in the nucleus. The protein resides in the chromosome. It localises to the telomere. The protein localises to the cytoplasm. Its subcellular location is the cytoskeleton. It is found in the spindle. In terms of biological role, key regulator of TP53BP1 that plays a key role in the repair of double-strand DNA breaks (DSBs) in response to DNA damage: acts by promoting non-homologous end joining (NHEJ)-mediated repair of DSBs. In response to DNA damage, interacts with ATM-phosphorylated TP53BP1. Interaction with TP53BP1 leads to dissociate the interaction between NUDT16L1/TIRR and TP53BP1, thereby unmasking the tandem Tudor-like domain of TP53BP1 and allowing recruitment to DNA DSBs. Once recruited to DSBs, RIF1 and TP53BP1 act by promoting NHEJ-mediated repair of DSBs. In the same time, RIF1 and TP53BP1 specifically counteract the function of BRCA1 by blocking DSBs resection via homologous recombination (HR) during G1 phase. Also required for immunoglobulin class-switch recombination (CSR) during antibody genesis, a process that involves the generation of DNA DSBs. Promotes NHEJ of dysfunctional telomeres. This is Telomere-associated protein RIF1 from Homo sapiens (Human).